A 356-amino-acid chain; its full sequence is Chorismate synthase (356 aa).

Positions 48 and 54 each coordinate NADP(+). Residues 125–127 (RSS), 237–238 (NA), glycine 282, 297–301 (KPTSS), and arginine 323 contribute to the FMN site.

Belongs to the chorismate synthase family. In terms of assembly, homotetramer. FMNH2 is required as a cofactor.

It catalyses the reaction 5-O-(1-carboxyvinyl)-3-phosphoshikimate = chorismate + phosphate. Its pathway is metabolic intermediate biosynthesis; chorismate biosynthesis; chorismate from D-erythrose 4-phosphate and phosphoenolpyruvate: step 7/7. Its function is as follows. Catalyzes the anti-1,4-elimination of the C-3 phosphate and the C-6 proR hydrogen from 5-enolpyruvylshikimate-3-phosphate (EPSP) to yield chorismate, which is the branch point compound that serves as the starting substrate for the three terminal pathways of aromatic amino acid biosynthesis. This reaction introduces a second double bond into the aromatic ring system. The chain is Chorismate synthase from Rhizorhabdus wittichii (strain DSM 6014 / CCUG 31198 / JCM 15750 / NBRC 105917 / EY 4224 / RW1) (Sphingomonas wittichii).